The chain runs to 178 residues: MSLNRSEKEAVISDVTGLAAKAQTLVMAEYRGITVADMTKLRSTARSNGVSLSVLKNTLARRAVTGSGFEIVSDLMTGPLIYGFSEDAVAAARVVADFAKTNVKLVIRGGAYGGKALDVNGVKQLASIPSKEVLLAQLLGLMQSPISRTARVLAAIAEKKGAGVADAPVEAAAEAVAA.

It belongs to the universal ribosomal protein uL10 family. As to quaternary structure, part of the ribosomal stalk of the 50S ribosomal subunit. The N-terminus interacts with L11 and the large rRNA to form the base of the stalk. The C-terminus forms an elongated spine to which L12 dimers bind in a sequential fashion forming a multimeric L10(L12)X complex.

Functionally, forms part of the ribosomal stalk, playing a central role in the interaction of the ribosome with GTP-bound translation factors. This is Large ribosomal subunit protein uL10 from Albidiferax ferrireducens (strain ATCC BAA-621 / DSM 15236 / T118) (Rhodoferax ferrireducens).